We begin with the raw amino-acid sequence, 162 residues long: RNA replication protein (162 aa).

This sequence belongs to the potexvirus/carlavirus RNA replication protein family.

The catalysed reaction is RNA(n) + a ribonucleoside 5'-triphosphate = RNA(n+1) + diphosphate. It carries out the reaction ATP + H2O = ADP + phosphate + H(+). Its function is as follows. RNA replication. The central part of this protein possibly functions as an ATP-binding helicase. This chain is RNA replication protein, found in Lilium formosanum.